Reading from the N-terminus, the 533-residue chain is Solute carrier family 2, facilitated glucose transporter member 2 (533 aa).

Over Met1–Leu17 the chain is Cytoplasmic. A helical transmembrane segment spans residues Val18–Ile38. The Extracellular segment spans residues Asn39–Ser110. 2 N-linked (GlcNAc...) asparagine glycosylation sites follow: Asn64 and Asn69. A helical transmembrane segment spans residues Leu111–Gly131. At Asp132–Arg136 the chain is on the cytoplasmic side. Residues Val137–Ala157 form a helical membrane-spanning segment. At Lys158 to His163 the chain is on the extracellular side. A helical transmembrane segment spans residues Ile164–Val184. The Cytoplasmic portion of the chain corresponds to Pro185–Ala199. The helical transmembrane segment at Leu200 to Leu220 threads the bilayer. Residue Gln205 coordinates D-glucose. Residues Asp221 to Leu229 lie on the Extracellular side of the membrane. The chain crosses the membrane as a helical span at residues Trp230 to Leu250. Topologically, residues Cys251–Ala315 are cytoplasmic. A helical membrane pass occupies residues Val316–Tyr336. D-glucose-binding positions include Gln326–Gln327 and Asn332. The Extracellular segment spans residues Tyr337–Pro350. The helical transmembrane segment at Val351–Leu371 threads the bilayer. Residue Asn361 coordinates D-glucose. Residues Val372–Ser379 lie on the Cytoplasmic side of the membrane. A helical membrane pass occupies residues Leu380–Val400. The Extracellular segment spans residues Leu401–Met413. A helical transmembrane segment spans residues Val414–Ile434. Residues Glu424 and Trp432 each coordinate D-glucose. At Val435–Pro445 the chain is on the cytoplasmic side. A helical membrane pass occupies residues Ala446–Phe466. Residues Gln467–Asp471 lie on the Extracellular side of the membrane. The helical transmembrane segment at Leu472–Ala492 threads the bilayer. At Tyr493–Ala533 the chain is on the cytoplasmic side.

This sequence belongs to the major facilitator superfamily. Sugar transporter (TC 2.A.1.1) family. Glucose transporter subfamily.

The protein localises to the cell membrane. It carries out the reaction D-glucose(out) = D-glucose(in). The catalysed reaction is D-fructose(out) = D-fructose(in). The enzyme catalyses L-dehydroascorbate(out) = L-dehydroascorbate(in). It catalyses the reaction D-galactose(in) = D-galactose(out). Its activity is regulated as follows. D-glucose and maltose competitively inhibit fructose transport. D-glucose, D-fructose and maltose inhibit deoxyglucose transport. Its function is as follows. Facilitative hexose transporter that mediates the transport of glucose, fructose and galactose. Likely mediates the bidirectional transfer of glucose across the plasma membrane of hepatocytes and is responsible for uptake of glucose by the beta cells. This Gallus gallus (Chicken) protein is Solute carrier family 2, facilitated glucose transporter member 2.